The chain runs to 369 residues: S-(hydroxymethyl)glutathione dehydrogenase (369 aa).

Residues Cys40, His62, Cys92, Cys95, Cys98, Cys106, and Cys169 each coordinate Zn(2+).

The protein belongs to the zinc-containing alcohol dehydrogenase family. Class-III subfamily. Homodimer. Zn(2+) is required as a cofactor.

Its subcellular location is the cytoplasm. The enzyme catalyses S-(hydroxymethyl)glutathione + NADP(+) = S-formylglutathione + NADPH + H(+). The catalysed reaction is S-(hydroxymethyl)glutathione + NAD(+) = S-formylglutathione + NADH + H(+). It carries out the reaction a primary alcohol + NAD(+) = an aldehyde + NADH + H(+). It catalyses the reaction a secondary alcohol + NAD(+) = a ketone + NADH + H(+). The enzyme catalyses S-nitrosoglutathione + NADH + H(+) = S-(hydroxysulfenamide)glutathione + NAD(+). In terms of biological role, has high formaldehyde dehydrogenase activity in the presence of glutathione and catalyzes the oxidation of normal alcohols in a reaction that is not GSH-dependent. In addition, hemithiolacetals other than those formed from GSH, including omega-thiol fatty acids, also are substrates. Also acts as a S-nitroso-glutathione reductase by catalyzing the NADH-dependent reduction of S-nitrosoglutathione. This is S-(hydroxymethyl)glutathione dehydrogenase (frmA) from Photobacterium damsela subsp. piscicida (Pasteurella piscicida).